We begin with the raw amino-acid sequence, 991 residues long: Phosphate metabolism protein 7 (991 aa).

Topologically, residues 1 to 9 are extracellular; sequence MADSSSTSA. A helical transmembrane segment spans residues 10–30; sequence FISTLIIYGLTAVVFVWLFLL. The Cytoplasmic segment spans residues 31–91; the sequence is LRPKNRRVYE…TSVDGYFLLR (61 aa). Residues 92–112 traverse the membrane as a helical segment; the sequence is YIGIVGSLSFVGCLLLLPILL. Over 113 to 138 the chain is Extracellular; sequence PVNATNGNNLQGFELLSFSNVTNKNR. 2 N-linked (GlcNAc...) asparagine glycosylation sites follow: Asn115 and Asn132. A helical transmembrane segment spans residues 139-159; sequence FYAHVFLSWIFFGLFTYVIYK. The Cytoplasmic segment spans residues 160-388; that stretch reads ELYYYVVFRH…ERHSRRAVAN (229 aa). Residues 389-409 traverse the membrane as a helical segment; sequence TIMVLLIIFWAFPVAVVGIIS. The Extracellular portion of the chain corresponds to 410–437; that stretch reads NVNFLTDKVPFLRFINNMPTFLMGVITG. A helical membrane pass occupies residues 438-458; the sequence is LLPTIALVVLMSLVPPFIVML. The Cytoplasmic portion of the chain corresponds to 459–471; it reads GKLSGCVTRQETD. A helical transmembrane segment spans residues 472–492; the sequence is LYSQAWYYAFAVIQIFLVVTA. Residues 493–523 lie on the Extracellular side of the membrane; it reads TSSASSTVDSIIDRPRSAMTLLANNLPKASN. The helical transmembrane segment at 524–544 threads the bilayer; that stretch reads FYIMYFILKGLTGPTWTILQA. Residues 545–582 lie on the Cytoplasmic side of the membrane; that stretch reads VNLLLSKVLGRVLDSTPRQKWNRYNTLATPRMGIVYPG. The chain crosses the membrane as a helical span at residues 583 to 603; it reads IEILVCIYICYSIIAPILLFF. Ser604 is a topological domain (extracellular). Residues 605–625 form a helical membrane-spanning segment; sequence TVMLTLLYVAYLYNLNYVFGF. At 626–637 the chain is on the cytoplasmic side; it reads SFDLKGRNYPRA. The helical transmembrane segment at 638-658 threads the bilayer; sequence LFQIFVGIYLSEVCLLGLFIM. The Extracellular portion of the chain corresponds to 659-661; that stretch reads AKT. Residues 662–682 traverse the membrane as a helical segment; that stretch reads WGPLVLEVFWIVVTALAHIYM. Over 683–991 the chain is Cytoplasmic; the sequence is KRKFIPLFDA…PPDYEPEAKK (309 aa). The interval 749-787 is disordered; that stretch reads KANLIPDNDGSSENGTPSNPFESGSERASLSGSNAESDS. Over residues 757–785 the composition is skewed to polar residues; that stretch reads DGSSENGTPSNPFESGSERASLSGSNAES.

This sequence belongs to the CSC1 (TC 1.A.17) family.

The protein localises to the cell membrane. Acts as an osmosensitive calcium-permeable cation channel. In Saccharomyces cerevisiae (strain ATCC 204508 / S288c) (Baker's yeast), this protein is Phosphate metabolism protein 7 (PHM7).